We begin with the raw amino-acid sequence, 76 residues long: Conotoxin PnMKLT1-1111 (76 aa).

An N-terminal signal peptide occupies residues M1–A22. A propeptide spanning residues V23–D50 is cleaved from the precursor. Disulfide bonds link C53–C67, C60–C71, and C66–C75.

The protein belongs to the conotoxin O1 superfamily. As to expression, expressed by the venom duct.

The protein localises to the secreted. This Conus pennaceus (Feathered cone) protein is Conotoxin PnMKLT1-1111.